The chain runs to 165 residues: 6,7-dimethyl-8-ribityllumazine synthase (165 aa).

5-amino-6-(D-ribitylamino)uracil is bound by residues Phe-24, 62 to 64 (AFE), and 86 to 88 (AVI). 91 to 92 (DT) lines the (2S)-2-hydroxy-3-oxobutyl phosphate pocket. Residue His-94 is the Proton donor of the active site. Residue Phe-119 participates in 5-amino-6-(D-ribitylamino)uracil binding. Arg-133 serves as a coordination point for (2S)-2-hydroxy-3-oxobutyl phosphate.

Belongs to the DMRL synthase family.

It carries out the reaction (2S)-2-hydroxy-3-oxobutyl phosphate + 5-amino-6-(D-ribitylamino)uracil = 6,7-dimethyl-8-(1-D-ribityl)lumazine + phosphate + 2 H2O + H(+). It functions in the pathway cofactor biosynthesis; riboflavin biosynthesis; riboflavin from 2-hydroxy-3-oxobutyl phosphate and 5-amino-6-(D-ribitylamino)uracil: step 1/2. In terms of biological role, catalyzes the formation of 6,7-dimethyl-8-ribityllumazine by condensation of 5-amino-6-(D-ribitylamino)uracil with 3,4-dihydroxy-2-butanone 4-phosphate. This is the penultimate step in the biosynthesis of riboflavin. This chain is 6,7-dimethyl-8-ribityllumazine synthase, found in Prochlorococcus marinus (strain MIT 9313).